The chain runs to 238 residues: uncharacterized protein (238 aa).

Positions 219–238 are disordered; sequence EESINNNVDDTDDIDNDNFI. Residues 227–238 show a composition bias toward acidic residues; it reads DDTDDIDNDNFI.

This is an uncharacterized protein from Buchnera aphidicola subsp. Acyrthosiphon pisum (strain APS) (Acyrthosiphon pisum symbiotic bacterium).